Reading from the N-terminus, the 379-residue chain is Junctional adhesion molecule-like (379 aa).

The first 20 residues, 1-20 (MLCLLKLIVIPVILAPVGYP), serve as a signal peptide directing secretion. Residues 21-281 (QGLPGLTVSS…QQGILNGNQL (261 aa)) lie on the Extracellular side of the membrane. Ig-like V-type domains follow at residues 24–135 (PGLT…KPVE) and 140–250 (PEEP…KTIV). A disulfide bond links Cys45 and Cys119. Residues Asn79, Asn89, and Asn125 are each glycosylated (N-linked (GlcNAc...) asparagine). Cys158 and Cys236 form a disulfide bridge. The helical transmembrane segment at 282 to 302 (VIIVGIVCATFLLLPVLILIV) threads the bilayer. Topologically, residues 303–379 (KKAKWNKSSV…SLVRSSVRSK (77 aa)) are cytoplasmic. Tyr355 carries the post-translational modification Phosphotyrosine.

The protein belongs to the immunoglobulin superfamily. As to quaternary structure, homodimer; active form in leukocyte-endothelial cell adhesion. Interacts (homodimeric form) with CXADR. Interacts (via cytoplasmic domain) with the PI3 kinase; upon CXADR-binding. Interacts with ITGA4 and ITGB1; integrin alpha-4/beta-1 may regulate leukocyte to endothelial cells adhesion by controlling JAML homodimerization. Expressed by gamma-delta intraepithelial T cells (at protein level).

The protein resides in the cell membrane. It localises to the cell junction. Its function is as follows. Transmembrane protein of the plasma membrane of leukocytes that control their migration and activation through interaction with CXADR, a plasma membrane receptor found on adjacent epithelial and endothelial cells. The interaction between both receptors mediates the activation of gamma-delta T-cells, a subpopulation of T-cells residing in epithelia and involved in tissue homeostasis and repair. Upon epithelial CXADR-binding, JAML induces downstream cell signaling events in gamma-delta T-cells through PI3-kinase and MAP kinases. It results in proliferation and production of cytokines and growth factors by T-cells that in turn stimulate epithelial tissues repair. It also controls the transmigration of leukocytes within epithelial and endothelial tissues through adhesive interactions with epithelial and endothelial CXADR. This is Junctional adhesion molecule-like from Mus musculus (Mouse).